A 95-amino-acid polypeptide reads, in one-letter code: Aspartyl/glutamyl-tRNA(Asn/Gln) amidotransferase subunit C (95 aa).

This sequence belongs to the GatC family. In terms of assembly, heterotrimer of A, B and C subunits.

The catalysed reaction is L-glutamyl-tRNA(Gln) + L-glutamine + ATP + H2O = L-glutaminyl-tRNA(Gln) + L-glutamate + ADP + phosphate + H(+). It catalyses the reaction L-aspartyl-tRNA(Asn) + L-glutamine + ATP + H2O = L-asparaginyl-tRNA(Asn) + L-glutamate + ADP + phosphate + 2 H(+). In terms of biological role, allows the formation of correctly charged Asn-tRNA(Asn) or Gln-tRNA(Gln) through the transamidation of misacylated Asp-tRNA(Asn) or Glu-tRNA(Gln) in organisms which lack either or both of asparaginyl-tRNA or glutaminyl-tRNA synthetases. The reaction takes place in the presence of glutamine and ATP through an activated phospho-Asp-tRNA(Asn) or phospho-Glu-tRNA(Gln). This chain is Aspartyl/glutamyl-tRNA(Asn/Gln) amidotransferase subunit C, found in Prosthecochloris aestuarii (strain DSM 271 / SK 413).